The chain runs to 478 residues: Methionine aminopeptidase 2 (478 aa).

The segment at 1 to 122 (MAGVEEVAAS…TDPPSVPICD (122 aa)) is disordered. The residue at position 2 (alanine 2) is an N-acetylalanine. Residues 36-46 (KKKRRKKKKSK) are compositionally biased toward basic residues. At serine 45 the chain carries Phosphoserine. Residues 55 to 79 (EPDKESGASVDEVARQLERSALEDK) are compositionally biased toward basic and acidic residues. Residues serine 60 and serine 63 each carry the phosphoserine; alternate modification. O-linked (GlcNAc) serine; alternate glycosylation is found at serine 60 and serine 63. Serine 74 carries the phosphoserine modification. Residues 80–92 (ERDEDDEDGDGDG) show a composition bias toward acidic residues. The span at 97-109 (GKKKKKKKKKRGP) shows a compositional bias: basic residues. Position 231 (histidine 231) interacts with substrate. Aspartate 251, aspartate 262, and histidine 331 together coordinate a divalent metal cation. Histidine 339 is a substrate binding site. The a divalent metal cation site is built by glutamate 364 and glutamate 459.

It belongs to the peptidase M24A family. Methionine aminopeptidase eukaryotic type 2 subfamily. Interacts strongly with the eIF-2 gamma-subunit EIF2S3. Binds EIF2S1 at low magnesium concentrations. Co(2+) is required as a cofactor. Requires Zn(2+) as cofactor. Mn(2+) serves as cofactor. It depends on Fe(2+) as a cofactor. Post-translationally, contains approximately 12 O-linked N-acetylglucosamine (GlcNAc) residues. O-glycosylation is required for EIF2S1 binding.

It localises to the cytoplasm. It catalyses the reaction Release of N-terminal amino acids, preferentially methionine, from peptides and arylamides.. Cotranslationally removes the N-terminal methionine from nascent proteins. The N-terminal methionine is often cleaved when the second residue in the primary sequence is small and uncharged (Met-Ala-, Cys, Gly, Pro, Ser, Thr, or Val). The catalytic activity of human METAP2 toward Met-Val peptides is consistently two orders of magnitude higher than that of METAP1, suggesting that it is responsible for processing proteins containing N-terminal Met-Val and Met-Thr sequences in vivo. Its function is as follows. Protects eukaryotic initiation factor EIF2S1 from translation-inhibiting phosphorylation by inhibitory kinases such as EIF2AK2/PKR and EIF2AK1/HCR. Plays a critical role in the regulation of protein synthesis. The chain is Methionine aminopeptidase 2 from Homo sapiens (Human).